A 417-amino-acid polypeptide reads, in one-letter code: Succinate--CoA ligase [ADP-forming] subunit beta, mitochondrial (417 aa).

The N-terminal 24 residues, 1–24 (MLRKLANQSLSVAGKWQQQQLRRL), are a transit peptide targeting the mitochondrion. An ATP-grasp domain is found at 32 to 275 (AELMSKYGIN…SSQEDPREVA (244 aa)). ATP is bound by residues lysine 71, 78-80 (GRG), and glutamate 138. 2 residues coordinate Mg(2+): asparagine 230 and aspartate 244. Residues asparagine 295 and 352-354 (GIM) each bind substrate.

It belongs to the succinate/malate CoA ligase beta subunit family. In terms of assembly, heterodimer of an alpha and a beta subunit. It depends on Mg(2+) as a cofactor. Expressed in roots, stems, flowers, leaves and fruits.

It localises to the mitochondrion. The enzyme catalyses succinate + ATP + CoA = succinyl-CoA + ADP + phosphate. It functions in the pathway carbohydrate metabolism; tricarboxylic acid cycle; succinate from succinyl-CoA (ligase route): step 1/1. Succinyl-CoA synthetase functions in the citric acid cycle (TCA), coupling the hydrolysis of succinyl-CoA to the synthesis of ATP and thus represents the only step of substrate-level phosphorylation in the TCA. The beta subunit provides nucleotide specificity of the enzyme and binds the substrate succinate, while the binding sites for coenzyme A and phosphate are found in the alpha subunit. The polypeptide is Succinate--CoA ligase [ADP-forming] subunit beta, mitochondrial (Solanum lycopersicum (Tomato)).